A 188-amino-acid polypeptide reads, in one-letter code: Inosine triphosphate pyrophosphatase (188 aa).

Residue 9-14 (TGNAKK) participates in ITP binding. Mg(2+) is bound at residue glutamate 39. Residues lysine 51, 67–68 (DT), lysine 84, 143–146 (FGWD), lysine 166, and 171–172 (HR) contribute to the ITP site.

This sequence belongs to the HAM1 NTPase family. As to quaternary structure, homodimer. Mg(2+) is required as a cofactor. Mn(2+) serves as cofactor.

The protein resides in the cytoplasm. It carries out the reaction ITP + H2O = IMP + diphosphate + H(+). It catalyses the reaction dITP + H2O = dIMP + diphosphate + H(+). The catalysed reaction is XTP + H2O = XMP + diphosphate + H(+). Its function is as follows. Pyrophosphatase that hydrolyzes non-canonical purine nucleotides such as inosine triphosphate (ITP), deoxyinosine triphosphate (dITP) or xanthosine 5'-triphosphate (XTP) to their respective monophosphate derivatives. The enzyme does not distinguish between the deoxy- and ribose forms. Probably excludes non-canonical purines from RNA and DNA precursor pools, thus preventing their incorporation into RNA and DNA and avoiding chromosomal lesions. This chain is Inosine triphosphate pyrophosphatase, found in Aedes aegypti (Yellowfever mosquito).